The chain runs to 152 residues: Small ribosomal subunit protein bS6 (152 aa).

The tract at residues 94 to 152 is disordered; that stretch reads VKQEGPLPTPKPSNKSSTQSENKDNPETKVESKEEQSVTNSDTSTTKKDDNEIKENTES. Basic and acidic residues-rich tracts occupy residues 114-129 and 138-152; these read ENKDNPETKVESKEEQ and TTKKDDNEIKENTES.

Belongs to the bacterial ribosomal protein bS6 family.

In terms of biological role, binds together with bS18 to 16S ribosomal RNA. The chain is Small ribosomal subunit protein bS6 from Prochlorococcus marinus (strain MIT 9312).